A 724-amino-acid polypeptide reads, in one-letter code: Disks large homolog 4 (724 aa).

Residues cysteine 3 and cysteine 5 are each lipidated (S-palmitoyl cysteine). The tract at residues 15-35 (QDEDTPPLEHSPAHLPNQANS) is disordered. PDZ domains lie at 65 to 151 (EITL…VMRR) and 160 to 246 (EIKL…VAKP). 2 positions are modified to phosphoserine: serine 73 and serine 142. Tyrosine 240 bears the Phosphotyrosine mark. Serine 295 carries the post-translational modification Phosphoserine. The region spanning 313–393 (RIVIHRGSTG…QTVTIIAQYK (81 aa)) is the PDZ 3 domain. A phosphoserine mark is found at serine 415 and serine 418. The residue at position 420 (threonine 420) is a Phosphothreonine. Phosphoserine occurs at positions 422, 425, 449, and 480. The SH3 domain occupies 428 to 498 (KRGFYIRALF…PSKRRVERRE (71 aa)). The Guanylate kinase-like domain occupies 534–709 (ARPIIILGPT…IYHKVKRVIE (176 aa)). Tyrosine 580 carries the phosphotyrosine modification. Residues serine 606 and serine 654 each carry the phosphoserine modification. Tyrosine 715 carries the phosphotyrosine modification.

Belongs to the MAGUK family. Interacts through its PDZ domains with ANO2 and NETO1. Interacts through its first two PDZ domains with GRIN2A, GRIN2B, GRIN2C, GRIN2D. Interacts with ASIC3. Interacts with SEMA4C. Interacts with CXADR. Interacts with KCND2. Interacts with SYNGAP1. Interacts with LRRC4 and LRRC4B. Interacts with ERBB4. Interacts with KCNA1, KCNA2, KCNA3 and KCNA4. Interacts through its first PDZ domain with GRIK2, KCNA4 and CRIPT. Interacts through its second PDZ domain with the PDZ domain of NOS1 or the C-terminus of CAPON. Interacts through its third PDZ domain with NLGN1 and CRIPT, and probably with NLGN2 and NLGN3. Interacts through its guanylate kinase-like domain with KIF13B. Interacts through its guanylate kinase-like domain with DLGAP1/GKAP, DLGAP2, DLGAP3, DLGAP4, MAP1A, BEGAIN and SIPA1L1. Isoform 2 interacts through an L27 domain with HGS/HRS and the first L27 domain of CASK. Interacts with ADR1B and ANKS1B. May interact with HTR2A. Interacts with ADAM22. Interacts with KLHL17 and LGI1. Interacts with FRMPD4 (via C-terminus). Interacts with LRFN1, LRFN2 and LRFN4. Interacts (via N-terminal tandem pair of PDZ domains) with GPER1 (via C-terminus tail motif); the interaction is direct and induces the increase of GPER1 protein levels residing at the plasma membrane surface in a estradiol-independent manner. Interacts (via N-terminus tandem pair of PDZ domains) with NOS1 (via N-terminal domain). Interacts with SHANK3. Interacts with KCNJ4. Interacts with GPR85. Interacts with CACNG2 and MPP2 (via the SH3-Guanylate kinase-like sub-module). Interacts with ADGRB1. Found in a complex with PRR7 and GRIN1. Interacts (via PDZ3 domain and to lesser degree via PDZ2 domain) with PRR7. Component of the postsynaptic hippocampal AMPA-type glutamate receptor (AMPAR) complex, at least composed of pore forming AMPAR subunits GRIA1, GRIA2 and GRIA3 and AMPAR auxiliary proteins SHISA6 and SHISA7. Interacts (via its first two PDZ domains) with SHISA6 and SHISA7 (via PDZ-binding motif); the interaction is direct. Interacts with RPH3A and GRIN2A; this ternary complex regulates NMDA receptor composition at postsynaptic membranes. Interacts with ABR and BCR. Interacts with DGKI (via PDZ-binding motif); controls the localization of DGKI to the synapse. Interacts with C9orf72, SMCR8 and RAB39B. Interacts with ZDHHC5. Interacts with PTEN (via PDZ domain-binding motif); the interaction is induced by NMDA and is required for PTEN location at postsynaptic density. Found in a complex with GRIA1, GRIA2, GRIA3, GRIA4, CACNG8 and CNIH2. Interacts with FAM81A; the interaction facilitates condensate formation via liquid-liquid phase separation. Interacts with ADGRL3. Interacts with SORCS3. In terms of processing, palmitoylated. Palmitoylation is required for targeting to postsynaptic density, plasma membrane and synapses. Palmitoylation by ZDHHC2 occurs when the synaptic activity decreases and induces DLG4 synaptic clustering. Palmitoylation by ZDHHC15 regulates trafficking to the postsynaptic density and function in synaptogenesis. Palmitoylation may play a role in glutamate receptor GRIA1 synapse clustering. Depalmitoylated by ABHD17A and ABHD17B and to a lesser extent by ABHD17C, ABHD12, ABHD13, LYPLA1 and LYPLA2. Undergoes rapid synaptic palmitoylation/depalmitoylation cycles during neuronal development which slow down in mature neurons. Post-translationally, ubiquitinated by MDM2 in response to NMDA receptor activation, leading to proteasome-mediated degradation of DLG4 which is required for AMPA receptor endocytosis. As to expression, brain.

The protein resides in the cell membrane. The protein localises to the postsynaptic density. It is found in the synapse. It localises to the cytoplasm. Its subcellular location is the cell projection. The protein resides in the axon. The protein localises to the dendritic spine. It is found in the dendrite. It localises to the presynapse. In terms of biological role, postsynaptic scaffolding protein that plays a critical role in synaptogenesis and synaptic plasticity by providing a platform for the postsynaptic clustering of crucial synaptic proteins. Interacts with the cytoplasmic tail of NMDA receptor subunits and shaker-type potassium channels. Required for synaptic plasticity associated with NMDA receptor signaling. Overexpression or depletion of DLG4 changes the ratio of excitatory to inhibitory synapses in hippocampal neurons. May reduce the amplitude of ASIC3 acid-evoked currents by retaining the channel intracellularly. May regulate the intracellular trafficking of ADR1B. Also regulates AMPA-type glutamate receptor (AMPAR) immobilization at postsynaptic density keeping the channels in an activated state in the presence of glutamate and preventing synaptic depression. Under basal conditions, cooperates with FYN to stabilize palmitoyltransferase ZDHHC5 at the synaptic membrane through FYN-mediated phosphorylation of ZDHHC5 and its subsequent inhibition of association with endocytic proteins. This chain is Disks large homolog 4, found in Homo sapiens (Human).